Reading from the N-terminus, the 261-residue chain is MPNLLEKTRKITSILQRSVDSLDAELPYNTMAAQLADIIDCNACIINGGGNLLGYAMKYKTNTNRVEEFFETKQFPDYYVKSASRVYDTEANLSVDNDLSIFPVETKENFQDGITTIAPIYGGGMRLGTFIIWRNDKEFSDDDLILVEIASTVVGIQLLNLQTENLEENIRKQTAVTMAINTLSYSEMKAVAAILGELDGLEGRLTASVIADRIGITRSVIVNALRKLESAGIIESRSLGMKGTYLKVINEGIFDKLKEYN.

The GAF domain stretch occupies residues 1–159 (MPNLLEKTRK…ASTVVGIQLL (159 aa)). A DNA-binding region (H-T-H motif) is located at residues 207–226 (ASVIADRIGITRSVIVNALR).

It belongs to the CodY family.

The protein resides in the cytoplasm. Its function is as follows. DNA-binding global transcriptional regulator which is involved in the adaptive response to starvation and acts by directly or indirectly controlling the expression of numerous genes in response to nutrient availability. During rapid exponential growth, CodY is highly active and represses genes whose products allow adaptation to nutrient depletion. The polypeptide is Global transcriptional regulator CodY (Streptococcus agalactiae serotype Ia (strain ATCC 27591 / A909 / CDC SS700)).